The sequence spans 493 residues: Glycosyltransferase alg8 (493 aa).

4 helical membrane-spanning segments follow: residues 13 to 32 (GWLF…PTSI), 47 to 69 (VGIW…LYIV), 380 to 402 (LTVA…LLWI), and 422 to 444 (PAYP…YVFF).

The protein belongs to the glycosyltransferase 2 family.

Its subcellular location is the cell membrane. The protein operates within glycan biosynthesis; alginate biosynthesis. Possibly a processive enzyme that polymerizes GDP-mannuronic acid. The chain is Glycosyltransferase alg8 (alg8) from Pseudomonas syringae pv. tomato (strain ATCC BAA-871 / DC3000).